The primary structure comprises 157 residues: S-ribosylhomocysteine lyase (157 aa).

Fe cation-binding residues include His53, His57, and Cys124.

Belongs to the LuxS family. As to quaternary structure, homodimer. It depends on Fe cation as a cofactor.

The catalysed reaction is S-(5-deoxy-D-ribos-5-yl)-L-homocysteine = (S)-4,5-dihydroxypentane-2,3-dione + L-homocysteine. Its function is as follows. Involved in the synthesis of autoinducer 2 (AI-2) which is secreted by bacteria and is used to communicate both the cell density and the metabolic potential of the environment. The regulation of gene expression in response to changes in cell density is called quorum sensing. Catalyzes the transformation of S-ribosylhomocysteine (RHC) to homocysteine (HC) and 4,5-dihydroxy-2,3-pentadione (DPD). This Borrelia garinii subsp. bavariensis (strain ATCC BAA-2496 / DSM 23469 / PBi) (Borreliella bavariensis) protein is S-ribosylhomocysteine lyase.